Consider the following 140-residue polypeptide: Small ribosomal subunit protein eS17y (140 aa).

This sequence belongs to the eukaryotic ribosomal protein eS17 family.

This is Small ribosomal subunit protein eS17y (RPS17B) from Arabidopsis thaliana (Mouse-ear cress).